The chain runs to 307 residues: Aspartate carbamoyltransferase catalytic subunit (307 aa).

Carbamoyl phosphate-binding residues include R59 and T60. An L-aspartate-binding site is contributed by K87. Positions 109, 137, and 140 each coordinate carbamoyl phosphate. R170 and R224 together coordinate L-aspartate. Residues G265 and P266 each coordinate carbamoyl phosphate.

The protein belongs to the aspartate/ornithine carbamoyltransferase superfamily. ATCase family. As to quaternary structure, heterododecamer (2C3:3R2) of six catalytic PyrB chains organized as two trimers (C3), and six regulatory PyrI chains organized as three dimers (R2).

The enzyme catalyses carbamoyl phosphate + L-aspartate = N-carbamoyl-L-aspartate + phosphate + H(+). It participates in pyrimidine metabolism; UMP biosynthesis via de novo pathway; (S)-dihydroorotate from bicarbonate: step 2/3. Functionally, catalyzes the condensation of carbamoyl phosphate and aspartate to form carbamoyl aspartate and inorganic phosphate, the committed step in the de novo pyrimidine nucleotide biosynthesis pathway. In Cytophaga hutchinsonii (strain ATCC 33406 / DSM 1761 / CIP 103989 / NBRC 15051 / NCIMB 9469 / D465), this protein is Aspartate carbamoyltransferase catalytic subunit.